Consider the following 238-residue polypeptide: Small ribosomal subunit protein uS2 (238 aa).

The protein belongs to the universal ribosomal protein uS2 family.

This chain is Small ribosomal subunit protein uS2, found in Prochlorococcus marinus (strain MIT 9211).